The primary structure comprises 848 residues: Adenylate cyclase (848 aa).

The tract at residues 1 to 535 (MYLYIETLKQ…DISHHFPLRL (535 aa)) is catalytic. The segment at 541–848 (KALYSPCEIR…SQPAQQFQLH (308 aa)) is regulatory.

It belongs to the adenylyl cyclase class-1 family.

Its subcellular location is the cytoplasm. It carries out the reaction ATP = 3',5'-cyclic AMP + diphosphate. The regulatory domain is involved in the regulation of cyclase activity by the carbon source. The chain is Adenylate cyclase (cya) from Yersinia intermedia.